Reading from the N-terminus, the 249-residue chain is Carboxy-S-adenosyl-L-methionine synthase (249 aa).

S-adenosyl-L-methionine is bound by residues Y39, 64–66 (GCS), 117–118 (DI), N132, and R199.

This sequence belongs to the class I-like SAM-binding methyltransferase superfamily. Cx-SAM synthase family. As to quaternary structure, homodimer.

It catalyses the reaction prephenate + S-adenosyl-L-methionine = carboxy-S-adenosyl-L-methionine + 3-phenylpyruvate + H2O. Functionally, catalyzes the conversion of S-adenosyl-L-methionine (SAM) to carboxy-S-adenosyl-L-methionine (Cx-SAM). This Aeromonas hydrophila subsp. hydrophila (strain ATCC 7966 / DSM 30187 / BCRC 13018 / CCUG 14551 / JCM 1027 / KCTC 2358 / NCIMB 9240 / NCTC 8049) protein is Carboxy-S-adenosyl-L-methionine synthase.